A 308-amino-acid polypeptide reads, in one-letter code: Glutaminase (308 aa).

Substrate is bound by residues Ser66, Asn117, Glu161, Asn168, Tyr192, Tyr244, and Val262.

This sequence belongs to the glutaminase family. As to quaternary structure, homotetramer.

It catalyses the reaction L-glutamine + H2O = L-glutamate + NH4(+). In Salmonella heidelberg (strain SL476), this protein is Glutaminase.